The sequence spans 296 residues: Transcription repressor OFP3 (296 aa).

Disordered regions lie at residues 27–115 (MSRS…SANA) and 131–196 (PSDQ…AHSS). The span at 60–69 (LSSTAHHPQA) shows a compositional bias: polar residues. The segment covering 78 to 88 (SFKRKIKRKTV) has biased composition (basic residues). Over residues 92-115 (SSRLKLSTSSSLNHRSKSSSSANA) the composition is skewed to low complexity. Positions 136–159 (FVHDPEPHSSIDIKDELSVRKLDD) are enriched in basic and acidic residues. Positions 228 to 287 (IVLSSVDPEKDFRESMVEMIMENKMREQKDLEDLLACYLSLNSSEYHDVIIKAFENTWLH) constitute an OVATE domain.

Interacts with BLH1, BLH3, KNAT5 and KNAT7.

The protein localises to the nucleus. Functionally, transcriptional repressor that may regulate multiple aspects of plant growth and development through the regulation of BEL1-LIKE (BLH) and KNOX TALE (KNAT) homeodomain transcription factors. In Arabidopsis thaliana (Mouse-ear cress), this protein is Transcription repressor OFP3 (OFP3).